Here is a 65-residue protein sequence, read N- to C-terminus: Large ribosomal subunit protein bL35 (65 aa).

2 disordered regions span residues 1 to 23 (MPKLKTKSGAAKRFKKTGKGGFK) and 36 to 65 (MTTKRKRHLRGMNQVAKVDTTSLVQQMPYA). The span at 54-65 (DTTSLVQQMPYA) shows a compositional bias: polar residues.

Belongs to the bacterial ribosomal protein bL35 family.

In Francisella tularensis subsp. tularensis (strain FSC 198), this protein is Large ribosomal subunit protein bL35.